A 246-amino-acid polypeptide reads, in one-letter code: Small ribosomal subunit protein uS2 (246 aa).

It belongs to the universal ribosomal protein uS2 family.

The protein is Small ribosomal subunit protein uS2 of Burkholderia cenocepacia (strain ATCC BAA-245 / DSM 16553 / LMG 16656 / NCTC 13227 / J2315 / CF5610) (Burkholderia cepacia (strain J2315)).